The following is a 197-amino-acid chain: Probable chemoreceptor glutamine deamidase CheD 2 (197 aa).

Belongs to the CheD family.

The enzyme catalyses L-glutaminyl-[protein] + H2O = L-glutamyl-[protein] + NH4(+). Functionally, probably deamidates glutamine residues to glutamate on methyl-accepting chemotaxis receptors (MCPs), playing an important role in chemotaxis. The polypeptide is Probable chemoreceptor glutamine deamidase CheD 2 (Dechloromonas aromatica (strain RCB)).